A 473-amino-acid polypeptide reads, in one-letter code: Phosphatidylserine synthase 1 (473 aa).

At Ala2 the chain carries N-acetylalanine. Residues 2–35 (ASCVGSRTLSKDDVNYRMHFRMINEQQVEDITID) lie on the Cytoplasmic side of the membrane. Residues 36–56 (FFYRPHTITLLSFTIISLMYF) traverse the membrane as a helical segment. At 57–72 (AFTRDDCVPEDNIWRG) the chain is on the lumenal side. A helical transmembrane segment spans residues 73–93 (ILSVIFFFLIISVLAFPNGPF). Residues 94-102 (TRPHPALWR) are Cytoplasmic-facing. The chain crosses the membrane as a helical span at residues 103–123 (MVFGLSVLYFLFLVFLLFLNF). The Lumenal segment spans residues 124 to 186 (EQVKSLMYWL…AMKALLIRSY (63 aa)). The helical transmembrane segment at 187-207 (GLCWTISITWELTELFFMHLL) threads the bilayer. Topologically, residues 208 to 216 (PNFAECWWD) are cytoplasmic. The chain crosses the membrane as a helical span at residues 217–237 (QVILDILLCNGGGIWLGMVVC). Over 238–286 (RFLEMRTYHWASFKDIHTTTGKIKRAVLQFTPASWTYVRWFDPKSSFQR) the chain is Lumenal. The chain crosses the membrane as a helical span at residues 287–307 (VAGIYLFMIIWQLTELNTFFL). The Cytoplasmic portion of the chain corresponds to 308–319 (KHIFVFQASHPL). A helical transmembrane segment spans residues 320–342 (SWCRILFIGCITAPTVRQYYAYL). At 343 to 355 (TDTQCKRVGTQCW) the chain is on the lumenal side. The chain crosses the membrane as a helical span at residues 356-376 (VFGVIGFLEAIVCIKFGQDLF). At 377–383 (SKTQILY) the chain is on the cytoplasmic side. Residues 384 to 404 (VVLWLLCVAFTTFLCLYGMVW) traverse the membrane as a helical segment. Residues 405–473 (YAEHYGHREK…SKVTNGVGKK (69 aa)) are Lumenal-facing. Residues Ser417, Ser425, Ser442, and Ser454 each carry the phosphoserine modification. Positions 430-473 (WYHGKGSKGSEDSPPKHSNNNESHSSRRRNRHSKSKVTNGVGKK) are disordered. The span at 455–464 (SRRRNRHSKS) shows a compositional bias: basic residues.

This sequence belongs to the phosphatidyl serine synthase family.

It localises to the endoplasmic reticulum membrane. It catalyses the reaction a 1,2-diacyl-sn-glycero-3-phosphoethanolamine + L-serine = a 1,2-diacyl-sn-glycero-3-phospho-L-serine + ethanolamine. The catalysed reaction is a 1,2-diacyl-sn-glycero-3-phosphocholine + L-serine = a 1,2-diacyl-sn-glycero-3-phospho-L-serine + choline. It participates in phospholipid metabolism; phosphatidylserine biosynthesis. In terms of biological role, catalyzes a base-exchange reaction in which the polar head group of phosphatidylethanolamine (PE) or phosphatidylcholine (PC) is replaced by L-serine. Catalyzes mainly the conversion of phosphatidylcholine but also converts, in vitro and to a lesser extent, phosphatidylethanolamine. The protein is Phosphatidylserine synthase 1 (Ptdss1) of Rattus norvegicus (Rat).